Consider the following 3122-residue polypeptide: DNA polymerase zeta catalytic subunit (3122 aa).

5 disordered regions span residues 270–289, 425–457, 487–509, 524–545, and 842–886; these read QRRR…SQDC, GYQG…NEPQ, LCRN…EMEW, LDGT…RAHS, and TSTK…TFEN. Residues 277–286 show a composition bias toward polar residues; sequence ESSQISQPES. Positions 497–509 are enriched in acidic residues; it reads EEDDSSSEEEMEW. Polar residues-rich tracts occupy residues 533 to 545 and 842 to 860; these read DNPL…RAHS and TSTK…THND. Ser1029 is modified (phosphoserine). Disordered regions lie at residues 1034–1075, 1154–1285, 1429–1453, 1538–1616, 1842–1869, 1959–1979, and 2091–2138; these read YPIY…TLSF, VYNT…PTGI, VSVS…ESQT, KAQS…LSDD, NDVL…SFTP, NPRP…ESSN, and AAVP…RHSS. The residue at position 1040 (Thr1040) is a Phosphothreonine. Composition is skewed to basic residues over residues 1042 to 1063 and 1166 to 1179; these read KKSH…KQHR and KASR…KSKA. A compositionally biased stretch (basic and acidic residues) spans 1215–1239; the sequence is RANEKSLSRKHAIPADEKMKPHSEA. A compositionally biased stretch (polar residues) spans 1243-1270; the sequence is PNHQSVSELTSSSGAQALSKQKEMSQTG. Low complexity predominate over residues 1429 to 1440; it reads VSVSEQSKTSET. Composition is skewed to polar residues over residues 1441–1453 and 1538–1561; these read CSPG…ESQT and KAQS…ISVS. Over residues 1566–1587 the composition is skewed to basic residues; sequence KANKRTRPVTSPRKPRTPRRTK. A compositionally biased stretch (basic and acidic residues) spans 1588–1598; that stretch reads PKEQTPRRLKV. Over residues 1602–1615 the composition is skewed to polar residues; it reads NLQTSGHLDNSLSD. The tract at residues 1844-1895 is mediates interaction with MAD2L2; it reads VLTPTPDSSPRSTSSPLQSKNGSFTPRTAHILKPLMSPPSREEIVATLLDHD. Residues 1846 to 1859 show a composition bias toward low complexity; the sequence is TPTPDSSPRSTSSP. The span at 1860–1869 shows a compositional bias: polar residues; it reads LQSKNGSFTP. Position 1964 is a phosphoserine (Ser1964). Positions 3034, 3037, 3046, and 3049 each coordinate Zn(2+). The segment at 3034–3049 adopts a CysA-type zinc-finger fold; sequence CPVCDDLTQHGICSKC. Cys3078, Cys3081, Cys3091, and Cys3096 together coordinate [4Fe-4S] cluster. The short motif at 3078-3096 is the CysB motif element; sequence CRNCTGSFDRHIPCVSLNC.

This sequence belongs to the DNA polymerase type-B family. As to quaternary structure, heterodimer with MAD2L2. This dimer forms the minimal DNA polymerase zeta complex (Pol-zeta2), with REV3L bearing DNA polymerase catalytic activity, although its activity is very low in this context. Component of the tetrameric Pol-zeta complex (Pol-zeta4), which consists of REV3L, MAD2L2, POLD2 and POLD3; Pol-zeta4 is the fully active form of DNA polymerase zeta. [4Fe-4S] cluster is required as a cofactor.

It is found in the nucleus. It catalyses the reaction DNA(n) + a 2'-deoxyribonucleoside 5'-triphosphate = DNA(n+1) + diphosphate. Its function is as follows. Catalytic subunit of the DNA polymerase zeta complex, an error-prone polymerase specialized in translesion DNA synthesis (TLS). Lacks an intrinsic 3'-5' exonuclease activity and thus has no proofreading function. This Mus musculus (Mouse) protein is DNA polymerase zeta catalytic subunit (Rev3l).